A 177-amino-acid chain; its full sequence is ATP synthase subunit delta (177 aa).

This sequence belongs to the ATPase delta chain family. In terms of assembly, F-type ATPases have 2 components, F(1) - the catalytic core - and F(0) - the membrane proton channel. F(1) has five subunits: alpha(3), beta(3), gamma(1), delta(1), epsilon(1). F(0) has three main subunits: a(1), b(2) and c(10-14). The alpha and beta chains form an alternating ring which encloses part of the gamma chain. F(1) is attached to F(0) by a central stalk formed by the gamma and epsilon chains, while a peripheral stalk is formed by the delta and b chains.

The protein localises to the cell membrane. F(1)F(0) ATP synthase produces ATP from ADP in the presence of a proton or sodium gradient. F-type ATPases consist of two structural domains, F(1) containing the extramembraneous catalytic core and F(0) containing the membrane proton channel, linked together by a central stalk and a peripheral stalk. During catalysis, ATP synthesis in the catalytic domain of F(1) is coupled via a rotary mechanism of the central stalk subunits to proton translocation. In terms of biological role, this protein is part of the stalk that links CF(0) to CF(1). It either transmits conformational changes from CF(0) to CF(1) or is implicated in proton conduction. The chain is ATP synthase subunit delta from Buchnera aphidicola subsp. Acyrthosiphon pisum (strain 5A).